The sequence spans 200 residues: Small ribosomal subunit protein uS4c (200 aa).

The S4 RNA-binding domain occupies Met-91–Asn-154.

It belongs to the universal ribosomal protein uS4 family. In terms of assembly, part of the 30S ribosomal subunit. Contacts protein S5. The interaction surface between S4 and S5 is involved in control of translational fidelity.

The protein localises to the plastid. It localises to the chloroplast. Its function is as follows. One of the primary rRNA binding proteins, it binds directly to 16S rRNA where it nucleates assembly of the body of the 30S subunit. In terms of biological role, with S5 and S12 plays an important role in translational accuracy. The chain is Small ribosomal subunit protein uS4c (rps4) from Oltmannsiellopsis viridis (Marine flagellate).